The primary structure comprises 860 residues: Alpha,alpha-trehalose-phosphate synthase [UDP-forming] 6 (860 aa).

A Phosphoserine modification is found at serine 5. The tract at residues 53–557 is glycosyltransferase; it reads DRIIIVANEL…ARSFLQDLER (505 aa).

In the N-terminal section; belongs to the glycosyltransferase 20 family. This sequence in the C-terminal section; belongs to the trehalose phosphatase family. In terms of assembly, binds to the phosphopeptide-binding site of GRF/14-3-3. In terms of processing, phosphorylated. As to expression, expressed in seedlings, leaves, stems, flowers, siliques and roots.

The enzyme catalyses D-glucose 6-phosphate + UDP-alpha-D-glucose = alpha,alpha-trehalose 6-phosphate + UDP + H(+). Functionally, regulates plant architecture, shape of epidermal pavement cells and branching of trichomes. The chain is Alpha,alpha-trehalose-phosphate synthase [UDP-forming] 6 from Arabidopsis thaliana (Mouse-ear cress).